The following is a 34-amino-acid chain: Photosystem II reaction center protein M (34 aa).

The helical transmembrane segment at 5 to 25 threads the bilayer; the sequence is ILAFIATALFILVPTAFLLII.

It belongs to the PsbM family. PSII is composed of 1 copy each of membrane proteins PsbA, PsbB, PsbC, PsbD, PsbE, PsbF, PsbH, PsbI, PsbJ, PsbK, PsbL, PsbM, PsbT, PsbX, PsbY, PsbZ, Psb30/Ycf12, at least 3 peripheral proteins of the oxygen-evolving complex and a large number of cofactors. It forms dimeric complexes.

The protein localises to the plastid. The protein resides in the chloroplast thylakoid membrane. One of the components of the core complex of photosystem II (PSII). PSII is a light-driven water:plastoquinone oxidoreductase that uses light energy to abstract electrons from H(2)O, generating O(2) and a proton gradient subsequently used for ATP formation. It consists of a core antenna complex that captures photons, and an electron transfer chain that converts photonic excitation into a charge separation. This subunit is found at the monomer-monomer interface. This is Photosystem II reaction center protein M from Calycanthus floridus var. glaucus (Eastern sweetshrub).